Consider the following 1049-residue polypeptide: MIVEVPGQYNPKNVEDEVREFWHREDTYHKVRRLRSGGRRFFFVDGPPYTTGRIHLGTAWNKVIKDSILRYMSMRGYDLKDRAGWDMHGLPIEVKVEEHLGFRSKRDIESYGVDRFIEQCKSFALRQKDEMTEQFKSLGVWLDWDNPYMTLKNEYIEAAWWTLKRAHERGLLERGLRVVNWCPRCQTAIADSEVEYWDESDPSIYVKFPVEGEDNTYIVIWTTTPWTIPANVAVAVHKDFMYSKVRAWRRDGTYEILIMATDLIENVLKQGRYVDYEILESMRGEDLLSLTYKNPLQDLVPAQRDIVHRVHLADFVTAENTGIVHIAPGHGLEDYELGLEKRLPIFCPVGEDGRYTSEAGKKYEGKYVRDANPEVVEDLMERGALLASGELVHRYGHCWRCKTPIIFIATRQWFIGISELRDQMLKEIERVSWYPDWAGSARFKDWISNARDWCISRQRYWGIPLPIWICRSCGAMDVIGTAAELEARAGRPVEDLHRPAVDDVRLRCSCGGAMERVPDVFDVWFDSAVASWATLNFPRDEEEFRVWWPADFITEGHDQTRGWFYSQLGASMVAFGRAPYKSVLMHGFTLDEQGRKMSKSIGNVVHPEDVVERYGADTLRFYVLSSNAPWEDLHFSWEGAMNVNRMLNILWNAYRFPLPYMVLDRFDISKADTSKYDLRPEDRWIISRVNSLAKEIEENMSGYMLHRATRSLQEFVLEDLSRWYIQLVRPRTWIETEDPDKLAAYATLYNVMSTLVKLMAPFTPFLAESIYQNLVRGLDPSAPESVHMCDWPGYREDLIDKGLEESMSYVREISEAAANARQKGGRKLRWPVSRIIIASDEQLDLRDLLHVLRTQTNSKEVIILPPGEKPEMNLEISVVQKKIGPVFKGESRDVVEALTSMNPKEVKRIIESGEPLEWKGRSYMITEEMVEFREIPPANLIPAEFSKGTVYVDVSLTDELRAEGYAREIIRRIQDMRKDLDLKVDEMIRVSVALNSNEVVDLVSGWRDYISSEVRATLLRIGNDLDLEGELTKDWEVDGVKIRVSVARA.

Residues 48-58 (PYTTGRIHLGT) carry the 'HIGH' region motif. A 'KMSKS' region motif is present at residues 596–600 (KMSKS). Lysine 599 provides a ligand contact to ATP.

It belongs to the class-I aminoacyl-tRNA synthetase family. IleS type 2 subfamily. Monomer. Zn(2+) serves as cofactor.

The protein resides in the cytoplasm. The catalysed reaction is tRNA(Ile) + L-isoleucine + ATP = L-isoleucyl-tRNA(Ile) + AMP + diphosphate. Its function is as follows. Catalyzes the attachment of isoleucine to tRNA(Ile). As IleRS can inadvertently accommodate and process structurally similar amino acids such as valine, to avoid such errors it has two additional distinct tRNA(Ile)-dependent editing activities. One activity is designated as 'pretransfer' editing and involves the hydrolysis of activated Val-AMP. The other activity is designated 'posttransfer' editing and involves deacylation of mischarged Val-tRNA(Ile). This chain is Isoleucine--tRNA ligase, found in Methanothrix thermoacetophila (strain DSM 6194 / JCM 14653 / NBRC 101360 / PT) (Methanosaeta thermophila).